Reading from the N-terminus, the 122-residue chain is Large ribosomal subunit protein uL18 (122 aa).

Belongs to the universal ribosomal protein uL18 family. As to quaternary structure, part of the 50S ribosomal subunit; part of the 5S rRNA/L5/L18/L25 subcomplex. Contacts the 5S and 23S rRNAs.

Functionally, this is one of the proteins that bind and probably mediate the attachment of the 5S RNA into the large ribosomal subunit, where it forms part of the central protuberance. The protein is Large ribosomal subunit protein uL18 of Leptospira interrogans serogroup Icterohaemorrhagiae serovar copenhageni (strain Fiocruz L1-130).